A 192-amino-acid polypeptide reads, in one-letter code: Sarcoplasmic calcium-binding protein, beta chain (192 aa).

Position 1 is an N-acetylalanine (Ala1). EF-hand domains are found at residues 4–39, 56–91, 100–135, and 136–171; these read WDNRVKYIVRYMYDIDNDGFLDKNDFECLAVRVTLI, IMANLWNEIAELADFNKDGEVTVDEFKQAVQKNCKG, AFKVFIGNQFKTIDVDGDGMVGVDEYRLDCITRSAF, and ADVKEIDDAYDKLCTEEDKKAGGINLARYQELYAQF. Ca(2+)-binding residues include Asp17, Asp19, Asp21, Asp28, Asp69, Asn71, Asp73, Glu75, Glu80, Asp113, Asp115, Asp117, Met119, and Glu124.

In terms of assembly, SCPs from crayfish, lobster, and shrimp are polymorphic dimers; three isotypes (alpha-alpha, alpha-beta, and beta-beta) have been identified.

In terms of biological role, like parvalbumins, SCPs seem to be more abundant in fast contracting muscles, but no functional relationship can be established from this distribution. The protein is Sarcoplasmic calcium-binding protein, beta chain of Penaeus sp. (Penoeid shrimp).